Here is a 547-residue protein sequence, read N- to C-terminus: Phosphomethylpyrimidine synthase (547 aa).

Residues N146, M175, Y204, H240, 260–262 (SRG), 301–304 (DGLR), and E340 each bind substrate. H344 contributes to the Zn(2+) binding site. Y367 provides a ligand contact to substrate. Zn(2+) is bound at residue H408. [4Fe-4S] cluster is bound by residues C488, C491, and C496.

It belongs to the ThiC family. The cofactor is [4Fe-4S] cluster.

The enzyme catalyses 5-amino-1-(5-phospho-beta-D-ribosyl)imidazole + S-adenosyl-L-methionine = 4-amino-2-methyl-5-(phosphooxymethyl)pyrimidine + CO + 5'-deoxyadenosine + formate + L-methionine + 3 H(+). The protein operates within cofactor biosynthesis; thiamine diphosphate biosynthesis. Catalyzes the synthesis of the hydroxymethylpyrimidine phosphate (HMP-P) moiety of thiamine from aminoimidazole ribotide (AIR) in a radical S-adenosyl-L-methionine (SAM)-dependent reaction. This chain is Phosphomethylpyrimidine synthase, found in Mycobacterium bovis (strain ATCC BAA-935 / AF2122/97).